The sequence spans 1368 residues: DNA-directed RNA polymerase subunit beta (1368 aa).

The protein belongs to the RNA polymerase beta chain family. As to quaternary structure, the RNAP catalytic core consists of 2 alpha, 1 beta, 1 beta' and 1 omega subunit. When a sigma factor is associated with the core the holoenzyme is formed, which can initiate transcription.

It carries out the reaction RNA(n) + a ribonucleoside 5'-triphosphate = RNA(n+1) + diphosphate. In terms of biological role, DNA-dependent RNA polymerase catalyzes the transcription of DNA into RNA using the four ribonucleoside triphosphates as substrates. The protein is DNA-directed RNA polymerase subunit beta of Burkholderia cenocepacia (strain HI2424).